The chain runs to 245 residues: DNA terminal protein (245 aa).

The Nuclear localization signal motif lies at 4 to 55; that stretch reads KRLKKKLETKRKKSLLVSEGYSKKETKKLKGRELETVYKKKAHNRKNRERAR. An O-(5'-phospho-DNA)-tyrosine modification is found at tyrosine 194.

As to quaternary structure, interacts with the DNA-binding protein P1.

The protein localises to the virion. Acts as a primer for viral genomic replication. DNA terminal protein is covalently linked to the 5'-ends of both strands of the genome through a phosphodiester bond between the beta-hydroxyl group of a tyrosine residue and the 5'-phosphate of the terminal deoxythymidylate. This protein is essential for DNA replication and is involved in the priming of DNA elongation. This is DNA terminal protein from Bacillus thuringiensis (Bacillus thuringiensis bacteriophage Bam35c).